The chain runs to 283 residues: Thymidylate synthase (283 aa).

Arg-22 is a binding site for dUMP. Cys-160 acts as the Nucleophile in catalysis. DUMP contacts are provided by residues Arg-180–Asp-183, Asn-191, and His-221–Tyr-223. Position 183 (Asp-183) interacts with (6R)-5,10-methylene-5,6,7,8-tetrahydrofolate. Ser-282 provides a ligand contact to (6R)-5,10-methylene-5,6,7,8-tetrahydrofolate.

Belongs to the thymidylate synthase family. Bacterial-type ThyA subfamily. In terms of assembly, homodimer.

It is found in the cytoplasm. The catalysed reaction is dUMP + (6R)-5,10-methylene-5,6,7,8-tetrahydrofolate = 7,8-dihydrofolate + dTMP. It functions in the pathway pyrimidine metabolism; dTTP biosynthesis. Its function is as follows. Catalyzes the reductive methylation of 2'-deoxyuridine-5'-monophosphate (dUMP) to 2'-deoxythymidine-5'-monophosphate (dTMP) while utilizing 5,10-methylenetetrahydrofolate (mTHF) as the methyl donor and reductant in the reaction, yielding dihydrofolate (DHF) as a by-product. This enzymatic reaction provides an intracellular de novo source of dTMP, an essential precursor for DNA biosynthesis. In Shewanella pealeana (strain ATCC 700345 / ANG-SQ1), this protein is Thymidylate synthase.